Reading from the N-terminus, the 125-residue chain is MRHLFKLLFLYMQLNLLFYIPNKKSFLQLGEEKVYLTFQNSNTNLNIPYDSLLHKLNSDKNVFSKESYDNWSSFRQLIIDKYGRIQGILTESSKNSNLKNSIQLNNYLLQKTIYYEFLCIEFQLY.

The protein localises to the plastid. It is found in the chloroplast. This is an uncharacterized protein from Guillardia theta (Cryptophyte).